The primary structure comprises 450 residues: Bestrophin homolog 1 (450 aa).

Residues 1-31 (MTINYHKEIMTSHPWTFFLLLFKWKGSIWKA) lie on the Cytoplasmic side of the membrane. Residues 32–51 (VYMETIIFLICYGIISVIYK) form a helical membrane-spanning segment. Topologically, residues 52-60 (TAMGESSQR) are extracellular. Residues 61 to 82 (TFESLVRYFDKRLSYIPLEFVL) traverse the membrane as a helical segment. Topologically, residues 83 to 242 (GFFVTTVVNR…DWVPLPLMYP (160 aa)) are cytoplasmic. Residues 243 to 260 (QLVCLAVNLYFLVSIIAR) traverse the membrane as a helical segment. Residues 261 to 278 (QLVIEKHKMVDEVDVYFP) lie on the Extracellular side of the membrane. The helical transmembrane segment at 279-292 (VMTFLQFIFYMGWL) threads the bilayer. Residues 293–450 (KVIDVMLNPF…WKIPTNPQKF (158 aa)) lie on the Cytoplasmic side of the membrane. The Ca(2+) site is built by Asn300, Asp305, and Asp308.

It belongs to the anion channel-forming bestrophin (TC 1.A.46) family. Calcium-sensitive chloride channel subfamily. In terms of assembly, forms oligomers.

It is found in the cell membrane. It catalyses the reaction chloride(in) = chloride(out). Ligand-gated anion channel that allows the movement of chloride monoatomic anions across cell membranes when activated by Calcium (Ca2+). This Caenorhabditis elegans protein is Bestrophin homolog 1 (best-1).